Here is a 72-residue protein sequence, read N- to C-terminus: Large ribosomal subunit protein bL31c (72 aa).

The protein belongs to the bacterial ribosomal protein bL31 family. Type A subfamily. As to quaternary structure, part of the 50S ribosomal subunit.

Its subcellular location is the plastid. It localises to the chloroplast. Binds the 23S rRNA. The sequence is that of Large ribosomal subunit protein bL31c from Trieres chinensis (Marine centric diatom).